Reading from the N-terminus, the 301-residue chain is Bifunctional protein FolD (301 aa).

Residues 166 to 168 (GKS), Ser-191, and Ile-232 each bind NADP(+).

This sequence belongs to the tetrahydrofolate dehydrogenase/cyclohydrolase family. In terms of assembly, homodimer.

The enzyme catalyses (6R)-5,10-methylene-5,6,7,8-tetrahydrofolate + NADP(+) = (6R)-5,10-methenyltetrahydrofolate + NADPH. It catalyses the reaction (6R)-5,10-methenyltetrahydrofolate + H2O = (6R)-10-formyltetrahydrofolate + H(+). Its pathway is one-carbon metabolism; tetrahydrofolate interconversion. Functionally, catalyzes the oxidation of 5,10-methylenetetrahydrofolate to 5,10-methenyltetrahydrofolate and then the hydrolysis of 5,10-methenyltetrahydrofolate to 10-formyltetrahydrofolate. The chain is Bifunctional protein FolD from Orientia tsutsugamushi (strain Boryong) (Rickettsia tsutsugamushi).